The following is a 126-amino-acid chain: Small ribosomal subunit protein bS6 (126 aa).

Residues 99–126 (PLPAPRVVPGTEAPEPAQAAETPEPEAS) are disordered. The segment covering 107-120 (PGTEAPEPAQAAET) has biased composition (low complexity).

The protein belongs to the bacterial ribosomal protein bS6 family.

Binds together with bS18 to 16S ribosomal RNA. The polypeptide is Small ribosomal subunit protein bS6 (Synechococcus sp. (strain CC9902)).